A 314-amino-acid chain; its full sequence is HTH-type transcriptional regulator LeuO (314 aa).

One can recognise an HTH lysR-type domain in the interval 22-79; it reads VDLNLLTVFDAVMQEQNITRAAHVLGMSQPAVSNAVARLKVMFNDELFVRYGRGIQPT. Residues 39–58 constitute a DNA-binding region (H-T-H motif); the sequence is ITRAAHVLGMSQPAVSNAVA.

It belongs to the LysR transcriptional regulatory family.

In terms of biological role, a global transcription factor. Activates transcription of the 9 following operons; yjjQ-bglJ, yjjP, acrEF, ybdO, yjcRQP, casABCDE12, rhsD-ybbC, fepE and gltF, in most cases it probably interferes with silencing by H-NS and activates transcription. Represses transcription of the 3 following operons; uxaCA, sdaCB and btsT. H-NS repression of the bgl operon, leading to the ability to metabolize some beta-glucosides. It also directly activates the bgl operon. Activation is H-NS and BglJ-RcsB independent. The chain is HTH-type transcriptional regulator LeuO (leuO) from Escherichia coli (strain K12).